A 94-amino-acid polypeptide reads, in one-letter code: Large ribosomal subunit protein uL23 (94 aa).

This sequence belongs to the universal ribosomal protein uL23 family. In terms of assembly, part of the 50S ribosomal subunit. Contacts protein L29, and trigger factor when it is bound to the ribosome.

Its function is as follows. One of the early assembly proteins it binds 23S rRNA. One of the proteins that surrounds the polypeptide exit tunnel on the outside of the ribosome. Forms the main docking site for trigger factor binding to the ribosome. This chain is Large ribosomal subunit protein uL23, found in Pelobacter propionicus (strain DSM 2379 / NBRC 103807 / OttBd1).